Here is a 406-residue protein sequence, read N- to C-terminus: NAD(P)H-quinone oxidoreductase subunit H, organellar chromatophore (406 aa).

The protein belongs to the complex I 49 kDa subunit family. As to quaternary structure, NDH is composed of at least 16 different subunits, 5 of which are encoded in the nucleus.

The protein localises to the plastid. It is found in the organellar chromatophore thylakoid membrane. It carries out the reaction a quinone + NADH + H(+) = a quinol + NAD(+). Its function is as follows. NDH shuttles electrons from NAD(P)H:plastoquinone, via FMN and iron-sulfur (Fe-S) centers, to quinones in the photosynthetic chain and possibly in a chloroplast respiratory chain. The immediate electron acceptor for the enzyme in this species is believed to be plastoquinone. Couples the redox reaction to proton translocation, and thus conserves the redox energy in a proton gradient. The protein is NAD(P)H-quinone oxidoreductase subunit H, organellar chromatophore of Paulinella chromatophora.